A 147-amino-acid chain; its full sequence is 3-hydroxyacyl-[acyl-carrier-protein] dehydratase FabZ (147 aa).

Residue His-49 is part of the active site.

This sequence belongs to the thioester dehydratase family. FabZ subfamily.

The protein resides in the cytoplasm. It catalyses the reaction a (3R)-hydroxyacyl-[ACP] = a (2E)-enoyl-[ACP] + H2O. Involved in unsaturated fatty acids biosynthesis. Catalyzes the dehydration of short chain beta-hydroxyacyl-ACPs and long chain saturated and unsaturated beta-hydroxyacyl-ACPs. The polypeptide is 3-hydroxyacyl-[acyl-carrier-protein] dehydratase FabZ (Alkaliphilus metalliredigens (strain QYMF)).